Consider the following 1129-residue polypeptide: Nuclear pore complex protein 15 (1129 aa).

The protein belongs to the nucleoporin Nup133 family.

The protein localises to the nucleus envelope. The protein resides in the nucleus. Its subcellular location is the nuclear pore complex. In terms of biological role, important for early nematode development. The polypeptide is Nuclear pore complex protein 15 (Caenorhabditis elegans).